A 757-amino-acid chain; its full sequence is Elongation factor G, mitochondrial (757 aa).

The N-terminal 41 residues, 1-41 (MLERAALLHRLRLPAHSLPFIYNGALFGGAKRSFSATSKRC), are a transit peptide targeting the mitochondrion. One can recognise a tr-type G domain in the interval 66-347 (KLLRNIGVSA…AIVDYLPEPS (282 aa)). Residues 75–82 (AHIDSGKT), 146–150 (DTPGH), and 200–203 (NKMD) each bind GTP.

This sequence belongs to the TRAFAC class translation factor GTPase superfamily. Classic translation factor GTPase family. EF-G/EF-2 subfamily.

The protein localises to the mitochondrion. The protein operates within protein biosynthesis; polypeptide chain elongation. Its function is as follows. Mitochondrial GTPase that catalyzes the GTP-dependent ribosomal translocation step during translation elongation. During this step, the ribosome changes from the pre-translocational (PRE) to the post-translocational (POST) state as the newly formed A-site-bound peptidyl-tRNA and P-site-bound deacylated tRNA move to the P and E sites, respectively. Catalyzes the coordinated movement of the two tRNA molecules, the mRNA and conformational changes in the ribosome. The chain is Elongation factor G, mitochondrial from Eremothecium gossypii (strain ATCC 10895 / CBS 109.51 / FGSC 9923 / NRRL Y-1056) (Yeast).